The chain runs to 342 residues: Succinylglutamate desuccinylase (342 aa).

Zn(2+) contacts are provided by histidine 64, glutamate 67, and histidine 159. Glutamate 222 is a catalytic residue.

This sequence belongs to the AspA/AstE family. Succinylglutamate desuccinylase subfamily. Zn(2+) serves as cofactor.

The catalysed reaction is N-succinyl-L-glutamate + H2O = L-glutamate + succinate. It functions in the pathway amino-acid degradation; L-arginine degradation via AST pathway; L-glutamate and succinate from L-arginine: step 5/5. Transforms N(2)-succinylglutamate into succinate and glutamate. This is Succinylglutamate desuccinylase from Burkholderia orbicola (strain AU 1054).